A 99-amino-acid chain; its full sequence is uncharacterized protein (99 aa).

It belongs to the ycf15 family.

The protein localises to the plastid. It is found in the chloroplast. This is an uncharacterized protein from Saccharum hybrid (Sugarcane).